A 39-amino-acid polypeptide reads, in one-letter code: Photosystem I reaction center subunit IX (39 aa).

Residues 4–24 (FLTTAPVVAAIWFTLTAGILI) form a helical membrane-spanning segment.

The protein belongs to the PsaJ family.

It localises to the cellular thylakoid membrane. In terms of biological role, may help in the organization of the PsaE and PsaF subunits. The chain is Photosystem I reaction center subunit IX from Synechococcus sp. (strain CC9311).